Consider the following 210-residue polypeptide: Neuroendocrine protein 7B2 (210 aa).

Residues 1-24 form the signal peptide; that stretch reads MTSRMAILSGLLFWLLLEWNPAFA. Residues C118 and C128 are joined by a disulfide bond. Phosphoserine occurs at positions 139 and 203.

This sequence belongs to the 7B2 family. Interacts with PCSK2/PC2 early in the secretory pathway. Dissociation occurs at later stages. Proteolytically cleaved in the Golgi by a furin-like convertase to generate bioactive peptides. Post-translationally, sulfated on tyrosine residues.

It is found in the secreted. Functionally, acts as a molecular chaperone for PCSK2/PC2, preventing its premature activation in the regulated secretory pathway. Binds to inactive PCSK2 in the endoplasmic reticulum and facilitates its transport from there to later compartments of the secretory pathway where it is proteolytically matured and activated. Also required for cleavage of PCSK2 but does not appear to be involved in its folding. Plays a role in regulating pituitary hormone secretion. The C-terminal peptide inhibits PCSK2 in vitro. The protein is Neuroendocrine protein 7B2 (Scg5) of Rattus norvegicus (Rat).